We begin with the raw amino-acid sequence, 220 residues long: NADH-quinone oxidoreductase subunit I (220 aa).

4Fe-4S ferredoxin-type domains lie at 71–102 (LQRL…IITH) and 112–141 (DSYT…MGNR). 8 residues coordinate [4Fe-4S] cluster: Cys-82, Cys-85, Cys-88, Cys-92, Cys-121, Cys-124, Cys-127, and Cys-131. The tract at residues 187–220 (MQATPLDYVQEPSKEESKEESPTSPESHKGDENV) is disordered. The segment covering 198 to 220 (PSKEESKEESPTSPESHKGDENV) has biased composition (basic and acidic residues).

Belongs to the complex I 23 kDa subunit family. In terms of assembly, NDH-1 is composed of 14 different subunits. Subunits NuoA, H, J, K, L, M, N constitute the membrane sector of the complex. [4Fe-4S] cluster is required as a cofactor.

Its subcellular location is the cell inner membrane. The catalysed reaction is a quinone + NADH + 5 H(+)(in) = a quinol + NAD(+) + 4 H(+)(out). Functionally, NDH-1 shuttles electrons from NADH, via FMN and iron-sulfur (Fe-S) centers, to quinones in the respiratory chain. The immediate electron acceptor for the enzyme in this species is believed to be ubiquinone. Couples the redox reaction to proton translocation (for every two electrons transferred, four hydrogen ions are translocated across the cytoplasmic membrane), and thus conserves the redox energy in a proton gradient. This is NADH-quinone oxidoreductase subunit I from Helicobacter pylori (strain J99 / ATCC 700824) (Campylobacter pylori J99).